The chain runs to 168 residues: NADH-quinone oxidoreductase subunit I (168 aa).

2 4Fe-4S ferredoxin-type domains span residues 58–88 (LRTY…IEAQ) and 99–128 (VRYD…EGPN). Residues Cys68, Cys71, Cys74, Cys78, Cys108, Cys111, Cys114, and Cys118 each contribute to the [4Fe-4S] cluster site.

This sequence belongs to the complex I 23 kDa subunit family. As to quaternary structure, NDH-1 is composed of 14 different subunits. Subunits NuoA, H, J, K, L, M, N constitute the membrane sector of the complex. It depends on [4Fe-4S] cluster as a cofactor.

It localises to the cell inner membrane. The enzyme catalyses a quinone + NADH + 5 H(+)(in) = a quinol + NAD(+) + 4 H(+)(out). In terms of biological role, NDH-1 shuttles electrons from NADH, via FMN and iron-sulfur (Fe-S) centers, to quinones in the respiratory chain. The immediate electron acceptor for the enzyme in this species is believed to be ubiquinone. Couples the redox reaction to proton translocation (for every two electrons transferred, four hydrogen ions are translocated across the cytoplasmic membrane), and thus conserves the redox energy in a proton gradient. The sequence is that of NADH-quinone oxidoreductase subunit I from Ehrlichia ruminantium (strain Gardel).